Reading from the N-terminus, the 388-residue chain is Chorismate synthase (388 aa).

NADP(+) is bound by residues arginine 39 and arginine 45. FMN is bound by residues 130-132 (RSS), 251-252 (NA), glycine 296, 311-315 (KPIPT), and arginine 337.

It belongs to the chorismate synthase family. As to quaternary structure, homotetramer. FMNH2 is required as a cofactor.

The catalysed reaction is 5-O-(1-carboxyvinyl)-3-phosphoshikimate = chorismate + phosphate. Its pathway is metabolic intermediate biosynthesis; chorismate biosynthesis; chorismate from D-erythrose 4-phosphate and phosphoenolpyruvate: step 7/7. Its function is as follows. Catalyzes the anti-1,4-elimination of the C-3 phosphate and the C-6 proR hydrogen from 5-enolpyruvylshikimate-3-phosphate (EPSP) to yield chorismate, which is the branch point compound that serves as the starting substrate for the three terminal pathways of aromatic amino acid biosynthesis. This reaction introduces a second double bond into the aromatic ring system. This Streptococcus pyogenes serotype M6 (strain ATCC BAA-946 / MGAS10394) protein is Chorismate synthase.